A 426-amino-acid polypeptide reads, in one-letter code: Glutamate-1-semialdehyde 2,1-aminomutase (426 aa).

The residue at position 266 (Lys266) is an N6-(pyridoxal phosphate)lysine.

It belongs to the class-III pyridoxal-phosphate-dependent aminotransferase family. HemL subfamily. Requires pyridoxal 5'-phosphate as cofactor.

Its subcellular location is the cytoplasm. The catalysed reaction is (S)-4-amino-5-oxopentanoate = 5-aminolevulinate. It participates in porphyrin-containing compound metabolism; protoporphyrin-IX biosynthesis; 5-aminolevulinate from L-glutamyl-tRNA(Glu): step 2/2. The protein is Glutamate-1-semialdehyde 2,1-aminomutase (hemL) of Methanocaldococcus jannaschii (strain ATCC 43067 / DSM 2661 / JAL-1 / JCM 10045 / NBRC 100440) (Methanococcus jannaschii).